A 1093-amino-acid polypeptide reads, in one-letter code: Protein translocase subunit SecA (1093 aa).

Residues glutamine 84, glycine 102 to threonine 106, and aspartate 491 each bind ATP. 2 disordered regions span residues glutamine 837–glutamate 869 and serine 904–alanine 1062. 3 stretches are compositionally biased toward basic and acidic residues: residues serine 904 to lysine 937, glutamate 944 to lysine 971, and proline 978 to alanine 1062.

It belongs to the SecA family. As to quaternary structure, monomer and homodimer. Part of the essential Sec protein translocation apparatus which comprises SecA, SecYEG and auxiliary proteins SecDF. Other proteins may also be involved.

Its subcellular location is the cell membrane. It localises to the cytoplasm. It carries out the reaction ATP + H2O + cellular proteinSide 1 = ADP + phosphate + cellular proteinSide 2.. Its function is as follows. Part of the Sec protein translocase complex. Interacts with the SecYEG preprotein conducting channel. Has a central role in coupling the hydrolysis of ATP to the transfer of proteins into and across the cell membrane, serving as an ATP-driven molecular motor driving the stepwise translocation of polypeptide chains across the membrane. The polypeptide is Protein translocase subunit SecA (Mycoplasmopsis synoviae (strain 53) (Mycoplasma synoviae)).